A 157-amino-acid chain; its full sequence is Ribosome maturation factor RimP (157 aa).

Belongs to the RimP family.

The protein resides in the cytoplasm. In terms of biological role, required for maturation of 30S ribosomal subunits. The sequence is that of Ribosome maturation factor RimP from Geobacillus sp. (strain WCH70).